Consider the following 836-residue polypeptide: Glutamate receptor ionotropic, kainate glr-3 (836 aa).

Positions 1 to 19 are cleaved as a signal peptide; it reads MFWIAKTLIAFLILLKTDC. Residues 20 to 523 lie on the Extracellular side of the membrane; the sequence is YKIAIPANLI…WFKFMDPLST (504 aa). A disulfide bridge connects residues C76 and C320. N-linked (GlcNAc...) asparagine glycans are attached at residues N225, N257, N356, N391, and N419. L-glutamate is bound by residues 478–480 and R485; that span reads SLT. The helical transmembrane segment at 524–544 threads the bilayer; sequence QVWIMTFASYFVVSVAIWIIA. Residues 545 to 600 lie on the Cytoplasmic side of the membrane; sequence KISPYEQFERDEDNGQYKPVDNQFSLRNSFWFTVCSLMQQGSELCPRAASTRLLTG. A helical transmembrane segment spans residues 601–621; sequence IWWFFALILISSYTANLAAVL. The Extracellular segment spans residues 622 to 780; the sequence is TTRRMETPIE…KRKDQDDGES (159 aa). Residue 651–652 coordinates L-glutamate; the sequence is ST. N-linked (GlcNAc...) asparagine glycosylation is present at N657. E699 serves as a coordination point for L-glutamate. A helical membrane pass occupies residues 781–801; that stretch reads IGGIFIILVVGLVLTAVLVIF. The Cytoplasmic portion of the chain corresponds to 802–836; sequence ELITTRKPSPAQSQVIRHVNVIPSFKLGFFRWNVN.

It belongs to the glutamate-gated ion channel (TC 1.A.10.1) family. As to expression, expressed in the intestine and in the ASER neuron. Also expressed in the thermosensitive RIA interneuron.

It is found in the cell membrane. The protein resides in the postsynaptic cell membrane. Its activity is regulated as follows. Activated by low temperature of 18 degrees Celsius in ASER neuron. In terms of biological role, ionotropic glutamate receptor. Activation by glutamate requires additional verification. L-glutamate acts as an excitatory neurotransmitter at many synapses in the central nervous system. Binding of the excitatory neurotransmitter L-glutamate induces a conformation change, leading to the opening of the cation channel, and thereby converts the chemical signal to an electrical impulse. The receptor then desensitizes rapidly and enters a transient inactive state, characterized by the presence of bound agonist. Independent of its ionotropic glutamate receptor activity, acts as a thermoreceptor in the ASER neuron where it triggers a calcium response to activate cold avoidance behavior in response to temperatures below 19 degrees Celsius. Possibly functions as a metabotropic cold receptor and acts upstream of the G(o) G protein goa-1 in the ASER neuron. Also functions in cold sensing in the intestine. This Caenorhabditis elegans protein is Glutamate receptor ionotropic, kainate glr-3.